We begin with the raw amino-acid sequence, 871 residues long: DNA mismatch repair protein MutS (871 aa).

630–637 (GPNMGGKS) contributes to the ATP binding site. The interval 830-849 (KEEPESKSASPVEAALAGIN) is disordered.

This sequence belongs to the DNA mismatch repair MutS family.

This protein is involved in the repair of mismatches in DNA. It is possible that it carries out the mismatch recognition step. This protein has a weak ATPase activity. This Verminephrobacter eiseniae (strain EF01-2) protein is DNA mismatch repair protein MutS.